Reading from the N-terminus, the 114-residue chain is Iron-sulfur cluster insertion protein ErpA (114 aa).

Iron-sulfur cluster-binding residues include Cys-42, Cys-106, and Cys-108.

It belongs to the HesB/IscA family. As to quaternary structure, homodimer. Iron-sulfur cluster serves as cofactor.

Its function is as follows. Required for insertion of 4Fe-4S clusters for at least IspG. The chain is Iron-sulfur cluster insertion protein ErpA from Haemophilus ducreyi (strain 35000HP / ATCC 700724).